The primary structure comprises 1399 residues: DNA-directed RNA polymerase subunit beta' (1399 aa).

C70, C72, C85, and C88 together coordinate Zn(2+). Mg(2+) is bound by residues D460, D462, and D464. Zn(2+) is bound by residues C814, C888, C895, and C898.

This sequence belongs to the RNA polymerase beta' chain family. As to quaternary structure, the RNAP catalytic core consists of 2 alpha, 1 beta, 1 beta' and 1 omega subunit. When a sigma factor is associated with the core the holoenzyme is formed, which can initiate transcription. Mg(2+) serves as cofactor. Zn(2+) is required as a cofactor.

The enzyme catalyses RNA(n) + a ribonucleoside 5'-triphosphate = RNA(n+1) + diphosphate. Its function is as follows. DNA-dependent RNA polymerase catalyzes the transcription of DNA into RNA using the four ribonucleoside triphosphates as substrates. The sequence is that of DNA-directed RNA polymerase subunit beta' from Pseudomonas putida (strain GB-1).